Here is a 342-residue protein sequence, read N- to C-terminus: S-adenosylmethionine:tRNA ribosyltransferase-isomerase (342 aa).

It belongs to the QueA family. As to quaternary structure, monomer.

The protein localises to the cytoplasm. The catalysed reaction is 7-aminomethyl-7-carbaguanosine(34) in tRNA + S-adenosyl-L-methionine = epoxyqueuosine(34) in tRNA + adenine + L-methionine + 2 H(+). Its pathway is tRNA modification; tRNA-queuosine biosynthesis. Transfers and isomerizes the ribose moiety from AdoMet to the 7-aminomethyl group of 7-deazaguanine (preQ1-tRNA) to give epoxyqueuosine (oQ-tRNA). The protein is S-adenosylmethionine:tRNA ribosyltransferase-isomerase of Campylobacter jejuni subsp. jejuni serotype O:23/36 (strain 81-176).